A 229-amino-acid polypeptide reads, in one-letter code: ATP synthase subunit a (229 aa).

The next 6 membrane-spanning stretches (helical) occupy residues 25–45, 86–106, 111–131, 142–162, 181–201, and 202–222; these read ADAIAYTWLIIVCLLIVSLIA, IATLALFVLVSNLIGLIPGFF, NLNTTAACAVIVFLSTHIVGI, FMGPIWWLAPLMFFIEIIGHL, LVLMIFFALAPFLVPLPMMLM, and GVLVSFIQAFVFMLLAMIYIQ.

Belongs to the ATPase A chain family. As to quaternary structure, F-type ATPases have 2 components, CF(1) - the catalytic core - and CF(0) - the membrane proton channel. CF(1) has five subunits: alpha(3), beta(3), gamma(1), delta(1), epsilon(1). CF(0) has three main subunits: a(1), b(2) and c(9-12). The alpha and beta chains form an alternating ring which encloses part of the gamma chain. CF(1) is attached to CF(0) by a central stalk formed by the gamma and epsilon chains, while a peripheral stalk is formed by the delta and b chains.

Its subcellular location is the cell inner membrane. Functionally, key component of the proton channel; it plays a direct role in the translocation of protons across the membrane. This chain is ATP synthase subunit a, found in Geobacter sulfurreducens (strain ATCC 51573 / DSM 12127 / PCA).